Consider the following 127-residue polypeptide: Profilin (127 aa).

This sequence belongs to the profilin family. Occurs in many kinds of cells as a complex with monomeric actin in a 1:1 ratio.

Its subcellular location is the cytoplasm. The protein resides in the cytoskeleton. Binds to actin and affects the structure of the cytoskeleton. At high concentrations, profilin prevents the polymerization of actin, whereas it enhances it at low concentrations. By binding to PIP2, it inhibits the formation of IP3 and DG. In S.pombe, it is essential for cytokinesis. This is Profilin (cdc3) from Schizosaccharomyces pombe (strain 972 / ATCC 24843) (Fission yeast).